The following is a 197-amino-acid chain: 3-isopropylmalate dehydratase small subunit (197 aa).

It belongs to the LeuD family. LeuD type 1 subfamily. Heterodimer of LeuC and LeuD.

It catalyses the reaction (2R,3S)-3-isopropylmalate = (2S)-2-isopropylmalate. The protein operates within amino-acid biosynthesis; L-leucine biosynthesis; L-leucine from 3-methyl-2-oxobutanoate: step 2/4. Its function is as follows. Catalyzes the isomerization between 2-isopropylmalate and 3-isopropylmalate, via the formation of 2-isopropylmaleate. This is 3-isopropylmalate dehydratase small subunit from Geobacillus sp. (strain WCH70).